The following is a 213-amino-acid chain: Putative manganese efflux pump MntP (213 aa).

6 helical membrane passes run 3–23, 36–56, 67–87, 130–150, 152–172, and 187–207; these read ILSI…VSVA, ALKV…IGWG, AFDH…MIFE, LAIA…FLGI, IVQT…LGVI, and IVGG…HTGI.

The protein belongs to the MntP (TC 9.B.29) family.

It localises to the cell membrane. Functionally, probably functions as a manganese efflux pump. This chain is Putative manganese efflux pump MntP, found in Clostridium perfringens (strain SM101 / Type A).